The primary structure comprises 419 residues: uncharacterized protein (419 aa).

12 helical membrane-spanning segments follow: residues 15–35 (RVLM…MPYL), 36–56 (ADYL…VMGV), 77–99 (YKPL…VVAQ), 104–126 (VLIA…RGYL), 140–160 (MFNV…LVLL), 166–186 (ITVL…LVAL), 213–233 (FLTL…IYLA), 246–266 (QYLL…GGQL), 282–302 (LVVG…IPNG), 309–329 (VAVM…AALF), 351–371 (FYST…GSLM), and 377–397 (LNTD…AVAG).

This sequence belongs to the major facilitator superfamily.

The protein localises to the cell membrane. This is an uncharacterized protein from Mycobacterium tuberculosis (strain CDC 1551 / Oshkosh).